The sequence spans 527 residues: Probable glucomannan 4-beta-mannosyltransferase 9 (527 aa).

A helical transmembrane segment spans residues A37 to F59. D131 is an active-site residue. D190 and D192 together coordinate substrate. The active site involves D284. Helical transmembrane passes span I363–I383, I399–V419, A478–G498, and F505–V525.

Belongs to the glycosyltransferase 2 family. Plant cellulose synthase-like A subfamily.

It is found in the golgi apparatus membrane. The catalysed reaction is GDP-mannose + (glucomannan)n = GDP + (glucomannan)n+1.. In terms of biological role, probable mannan synthase which consists of a 4-beta-mannosyltransferase activity on mannan using GDP-mannose. The beta-1,4-mannan product is the backbone for galactomannan synthesis by galactomannan galactosyltransferase. Galactomannan is a noncellulosic polysaccharides of plant cell wall. The chain is Probable glucomannan 4-beta-mannosyltransferase 9 from Oryza sativa subsp. japonica (Rice).